The primary structure comprises 789 residues: Ent-kaurene synthase TSP4, chloroplastic (789 aa).

The Mg(2+) site is built by aspartate 540 and aspartate 544. The DDXXD motif signature appears at aspartate 540 to aspartate 544. Residues alanine 638–glycine 656 traverse the membrane as a helical segment. Positions 684, 687, and 692 each coordinate Mg(2+).

This sequence belongs to the terpene synthase family. It depends on Mg(2+) as a cofactor. In terms of tissue distribution, expressed in leaves and fruits, including trichomes.

It localises to the plastid. The protein localises to the chloroplast membrane. The catalysed reaction is ent-copalyl diphosphate = ent-kaur-16-ene + diphosphate. It participates in plant hormone biosynthesis; gibberellin biosynthesis. Functionally, involved in the biosynthesis of labdane-type diterpenoid including cleroda-dienols, and peregrinol lactones and furan derivatives, dopaminergic diterpenoids that can bind to dopamine receptors in the human pituitary gland, have probably ability to lower prolactin levels, and are used to treat menstrual cycle disorders (e.g. premenstrual syndrome and mastodynia). Terpene synthase that produces ent-kaurene from ent-copalyl diphosphate. The protein is Ent-kaurene synthase TSP4, chloroplastic of Vitex agnus-castus (Chaste tree).